A 412-amino-acid polypeptide reads, in one-letter code: ATP phosphoribosyltransferase regulatory subunit (412 aa).

The protein belongs to the class-II aminoacyl-tRNA synthetase family. HisZ subfamily. In terms of assembly, heteromultimer composed of HisG and HisZ subunits.

The protein localises to the cytoplasm. It participates in amino-acid biosynthesis; L-histidine biosynthesis; L-histidine from 5-phospho-alpha-D-ribose 1-diphosphate: step 1/9. Required for the first step of histidine biosynthesis. May allow the feedback regulation of ATP phosphoribosyltransferase activity by histidine. This Dehalococcoides mccartyi (strain ATCC BAA-2266 / KCTC 15142 / 195) (Dehalococcoides ethenogenes (strain 195)) protein is ATP phosphoribosyltransferase regulatory subunit.